Here is a 475-residue protein sequence, read N- to C-terminus: Methylenetetrahydrofolate--tRNA-(uracil-5-)-methyltransferase TrmFO (475 aa).

Residue 13–18 participates in FAD binding; it reads GAGLAG.

The protein belongs to the MnmG family. TrmFO subfamily. The cofactor is FAD.

Its subcellular location is the cytoplasm. It carries out the reaction uridine(54) in tRNA + (6R)-5,10-methylene-5,6,7,8-tetrahydrofolate + NADH + H(+) = 5-methyluridine(54) in tRNA + (6S)-5,6,7,8-tetrahydrofolate + NAD(+). The catalysed reaction is uridine(54) in tRNA + (6R)-5,10-methylene-5,6,7,8-tetrahydrofolate + NADPH + H(+) = 5-methyluridine(54) in tRNA + (6S)-5,6,7,8-tetrahydrofolate + NADP(+). Its function is as follows. Catalyzes the folate-dependent formation of 5-methyl-uridine at position 54 (M-5-U54) in all tRNAs. This Bradyrhizobium diazoefficiens (strain JCM 10833 / BCRC 13528 / IAM 13628 / NBRC 14792 / USDA 110) protein is Methylenetetrahydrofolate--tRNA-(uracil-5-)-methyltransferase TrmFO.